Consider the following 154-residue polypeptide: Pro-corazonin (154 aa).

A signal peptide spans 1 to 19 (MLRLLLLPLFLFTLSMCMG). Position 20 is a pyrrolidone carboxylic acid (glutamine 20). Asparagine 30 bears the Asparagine amide mark. A propeptide spanning residues 70 to 154 (LERCLSQLQR…SAEPNVFGKH (85 aa)) is cleaved from the precursor. The tract at residues 91–119 (DFNANRVDPDPENSAHPRLSNSNGENVLY) is disordered. Residues 109-119 (LSNSNGENVLY) show a composition bias toward polar residues.

This sequence belongs to the corazonin family. In terms of tissue distribution, from late embryo to larva, expression is consistently detected in three neuronal groups: dorso-lateral neurons (DL), dorso-medial neurons (DM), and neurons in the ventral nerve cord (vCrz). Both the vCrz and DM groups die via programmed cell death during metamorphosis, whereas the DL neurons persist to adulthood. In adults, expression is seen in a cluster of six to eight neurons per lobe in the pars lateralis (DLP), in numerous neuronal cells in the optic lobes, and in a novel group of four abdominal ganglionic neurons present only in males (ms-aCrz). Projections of the ms-aCrz neurons terminate within the ventral nerve cord, implying a role as interneurons. Terminals of the DLP neurons are found in the retrocerebral complex that produces juvenile hormone and adipokinetic hormone, located in the vicinity of terminals emanating from PDF-containing pacemaking neurons.

The protein localises to the secreted. In terms of biological role, cardioactive peptide. Corazonin is probably involved in the physiological regulation of the heart beat. Clock (Clk) and cycle (cyc) proteins negatively regulate Crz transcription in a cell-specific manner. This is Pro-corazonin (Crz) from Drosophila melanogaster (Fruit fly).